The following is a 173-amino-acid chain: NADH-ubiquinone oxidoreductase chain 6 (173 aa).

A run of 5 helical transmembrane segments spans residues M1–S21, Y27–G47, V48–V68, G91–L111, and V141–L161.

The protein belongs to the complex I subunit 6 family.

It localises to the mitochondrion membrane. It carries out the reaction a ubiquinone + NADH + 5 H(+)(in) = a ubiquinol + NAD(+) + 4 H(+)(out). In terms of biological role, core subunit of the mitochondrial membrane respiratory chain NADH dehydrogenase (Complex I) that is believed to belong to the minimal assembly required for catalysis. Complex I functions in the transfer of electrons from NADH to the respiratory chain. The immediate electron acceptor for the enzyme is believed to be ubiquinone. In Fratercula arctica (Atlantic puffin), this protein is NADH-ubiquinone oxidoreductase chain 6 (MT-ND6).